Here is a 362-residue protein sequence, read N- to C-terminus: Replication-associated protein (362 aa).

In terms of domain architecture, CRESS-DNA virus Rep endonuclease spans 8–116 (RINAKNYFLT…DGDTLEWGEF (109 aa)). The RCR-1 signature appears at 15–18 (FLTY). A divalent metal cation-binding residues include glutamate 49, histidine 57, and histidine 59. The short motif at 57-59 (HLH) is the RCR-2 element. The For DNA cleavage activity role is filled by tyrosine 103. The RCR-3 motif lies at 103-106 (YLEK). An a divalent metal cation-binding site is contributed by aspartate 107. The interval 143–153 (KSEALNVLREL) is binding to RBR1. The oligomerization stretch occupies residues 156 to 176 (KDYVLQFHNLNSNLDRIFTPP). Residue 221-228 (GESRTGKT) participates in ATP binding. Residues 341–362 (YSGTYQGPTQNSEEEVHPEEEN) form a disordered region. Positions 352–362 (SEEEVHPEEEN) are enriched in acidic residues.

The protein belongs to the geminiviridae Rep protein family. As to quaternary structure, homooligomer. Interacts with the replication enhancer protein (REn). Interacts with host retinoblastoma-related protein 1 (RBR1), and may thereby induce the transcription of host replicative enzymes even if the cell is not dividing anymore. Interacts with host PCNA. Interacts with host SCE1 protein. Binds to host RAD54 protein to ensure geminiviral replication. The cofactor is Mg(2+). Requires Mn(2+) as cofactor.

Its subcellular location is the host nucleus. In terms of biological role, essential for the replication of viral ssDNA. The closed circular ssDNA genome is first converted to a superhelical dsDNA. Rep binds a specific region at the genome origin of replication. It introduces an endonucleolytic nick within the conserved sequence 5'-TAATATTAC-3' in the intergenic region of the genome present in all geminiviruses, thereby initiating the rolling circle replication (RCR). Following cleavage, binds covalently to the 5'-phosphate of DNA as a tyrosyl ester. The cleavage gives rise to a free 3'-OH that serves as a primer for the cellular DNA polymerase. The polymerase synthesizes the (+) strand DNA by rolling circle mechanism. After one round of replication, a Rep-catalyzed nucleotidyl transfer reaction releases a circular single-stranded virus genome, thereby terminating the replication. Displays origin-specific DNA cleavage, nucleotidyl transferase, ATPase and helicase activities. In Cynanchum acutum (Little mallow), this protein is Replication-associated protein.